A 165-amino-acid polypeptide reads, in one-letter code: Large ribosomal subunit protein uL15 (165 aa).

Residues 1–44 are disordered; sequence MSLNQLKAPRGANRAKKRVGRGQGSGLGKTAGRGGKGQKARSGN. Gly residues predominate over residues 21 to 37; sequence RGQGSGLGKTAGRGGKG.

It belongs to the universal ribosomal protein uL15 family. Part of the 50S ribosomal subunit.

Binds to the 23S rRNA. In Anaeromyxobacter dehalogenans (strain 2CP-1 / ATCC BAA-258), this protein is Large ribosomal subunit protein uL15.